Consider the following 493-residue polypeptide: Cobyric acid synthase (493 aa).

Positions 246–440 constitute a GATase cobBQ-type domain; it reads PIDIAVIKMP…IHGVFDGVAF (195 aa). Cysteine 326 functions as the Nucleophile in the catalytic mechanism. Residue histidine 432 is part of the active site.

It belongs to the CobB/CobQ family. CobQ subfamily.

It functions in the pathway cofactor biosynthesis; adenosylcobalamin biosynthesis. Its function is as follows. Catalyzes amidations at positions B, D, E, and G on adenosylcobyrinic A,C-diamide. NH(2) groups are provided by glutamine, and one molecule of ATP is hydrogenolyzed for each amidation. The polypeptide is Cobyric acid synthase (Clostridium botulinum (strain Loch Maree / Type A3)).